A 328-amino-acid chain; its full sequence is Phosphate acyltransferase (328 aa).

It belongs to the PlsX family. As to quaternary structure, homodimer. Probably interacts with PlsY.

The protein resides in the cytoplasm. It carries out the reaction a fatty acyl-[ACP] + phosphate = an acyl phosphate + holo-[ACP]. It functions in the pathway lipid metabolism; phospholipid metabolism. Functionally, catalyzes the reversible formation of acyl-phosphate (acyl-PO(4)) from acyl-[acyl-carrier-protein] (acyl-ACP). This enzyme utilizes acyl-ACP as fatty acyl donor, but not acyl-CoA. This Mycoplasma pneumoniae (strain ATCC 29342 / M129 / Subtype 1) (Mycoplasmoides pneumoniae) protein is Phosphate acyltransferase.